The primary structure comprises 912 residues: Androgen receptor (912 aa).

A modulating region spans residues 1-550 (MEVQLGLGRV…PIDYYFPPQK (550 aa)). Residues 1–579 (MEVQLGLGRV…GSCKVFFKRA (579 aa)) form an interaction with ZNF318 region. 2 disordered regions span residues 35 to 156 (QNPG…GPTF) and 204 to 236 (QQQQEVVSEGGSSGRAREAAGAPTSSKDSYLGG). Serine 69 carries the phosphoserine; by CDK9 modification. The residue at position 82 (serine 82) is a Phosphoserine. The segment covering 204–213 (QQQQEVVSEG) has biased composition (low complexity). The segment covering 226–236 (PTSSKDSYLGG) has biased composition (polar residues). Residue tyrosine 233 is modified to Phosphotyrosine; by CSK. The residue at position 266 (serine 266) is a Phosphoserine. Tyrosine 277 bears the Phosphotyrosine; by CSK and TNK2 mark. Phosphotyrosine; by CSK occurs at positions 315, 354, 365, and 370. Tyrosine 371 is subject to Phosphotyrosine; by CSK and TNK2. A disordered region spans residues 375 to 394 (LSLAGPPPPPPSPHPHARIK). Residues 379–388 (GPPPPPPSPH) are compositionally biased toward pro residues. A Glycyl lysine isopeptide (Lys-Gly) (interchain with G-Cter in SUMO) cross-link involves residue lysine 394. Tyrosine 401 carries the phosphotyrosine; by CSK modification. The disordered stretch occupies residues 452-490 (LYGPCGGSGGGGTGESVSVTPYGYTRPQQGLTGQEGDFP). The segment covering 455–465 (PCGGSGGGGTG) has biased composition (gly residues). Lysine 513 is covalently cross-linked (Glycyl lysine isopeptide (Lys-Gly) (interchain with G-Cter in SUMO)). Phosphotyrosine; by CSK occurs at positions 527 and 544. An interaction with LPXN region spans residues 544–911 (YYFPPQKTCL…GKVKPIYFHT (368 aa)). The nuclear receptor DNA-binding region spans 551 to 624 (TCLICGDEAS…AGMTLGARRL (74 aa)). 2 NR C4-type zinc fingers span residues 552–572 (CLICGDEASGCHYGALTCGSC) and 588–612 (CASRNDCTIDKFRRKNCPPCRLRKC). The interval 564–654 (YGALTCGSCK…TEETTQKLTV (91 aa)) is interaction with HIPK3. The segment at 584–911 (QKYLCASRND…GKVKPIYFHT (328 aa)) is interaction with CCAR1. The segment at 617–911 (MTLGARRLKK…GKVKPIYFHT (295 aa)) is interaction with KAT7. At serine 643 the chain carries Phosphoserine; by STK4/MST1. One can recognise an NR LBD domain in the interval 661–892 (ECQPIFLNVL…DFPEMMAEII (232 aa)). Positions 698 and 745 each coordinate 17beta-hydroxy-5alpha-androstan-3-one. Glycyl lysine isopeptide (Lys-Gly) (interchain with G-Cter in ubiquitin) cross-links involve residues lysine 838 and lysine 840. Threonine 870 lines the 17beta-hydroxy-5alpha-androstan-3-one pocket. At tyrosine 908 the chain carries Phosphotyrosine; by CSK.

It belongs to the nuclear hormone receptor family. NR3 subfamily. Binds DNA as a homodimer. Part of a ternary complex containing AR, EFCAB6/DJBP and PARK7. Interacts with HIPK3 and NR0B2 in the presence of androgen. The ligand binding domain interacts with KAT7/HBO1 in the presence of dihydrotestosterone. Interacts with EFCAB6/DJBP, PQBP1, RANBP9, RBAK, SPDEF, SRA1, TGFB1I1 and RREB1. Interacts with ZMIZ1/ZIMP10 and ZMIZ2/ZMIP7 which both enhance its transactivation activity. Interacts with SLC30A9 and RAD54L2/ARIP4. Interacts with MACROD1 (via macro domain). Interacts via the ligand-binding domain with LXXLL and FXXLF motifs from NCOA1, NCOA2, NCOA3 and MAGEA11. Interacts (via nuclear receptor DNA binding domain and nuclear receptor ligand binding domain) with NCOA4. The AR N-terminal poly-Gln region binds Ran resulting in enhancement of AR-mediated transactivation. Ran-binding decreases as the poly-Gln length increases. Interacts with HIP1 (via coiled coil domain). Interacts (via ligand-binding domain) with TRIM68. Interacts with TNK2. Interacts with USP26. Interacts with RNF6. Interacts (regulated by RNF6 probably through polyubiquitination) with RNF14; regulates AR transcriptional activity. Interacts with PRMT2 and TRIM24. Interacts with RACK1. Interacts with RANBP10; this interaction enhances dihydrotestosterone-induced AR transcriptional activity. Interacts with PRPF6 in a hormone-independent way; this interaction enhances dihydrotestosterone-induced AR transcriptional activity. Interacts with STK4/MST1. Interacts with ZIPK/DAPK3. Interacts with LPXN. Interacts with MAK. Part of a complex containing AR, MAK and NCOA3. Interacts with CRY1. Interacts with CCAR1 and GATA2. Interacts with ZNF318. Interacts with BUD31. Interacts with ARID4A. Interacts with ARID4B. Interacts (via NR LBD domain) with ZBTB7A; the interaction is direct and androgen-dependent. Interacts with NCOR1. Interacts with NCOR2. Interacts with CRY2 in a ligand-dependent manner. Phosphorylation by TNK2 enhances the DNA-binding and transcriptional activity. Phosphorylation at Ser-69 by CDK9 regulates AR promoter selectivity and cell growth. In terms of processing, sumoylated on Lys-394 (major) and Lys-513. Ubiquitinated. Deubiquitinated by USP26. 'Lys-6' and 'Lys-27'-linked polyubiquitination by RNF6 modulates AR transcriptional activity and specificity. Post-translationally, palmitoylated by ZDHHC7 and ZDHHC21. Palmitoylation is required for plasma membrane targeting and for rapid intracellular signaling via ERK and AKT kinases and cAMP generation.

Its subcellular location is the nucleus. It is found in the cytoplasm. In terms of biological role, steroid hormone receptors are ligand-activated transcription factors that regulate eukaryotic gene expression and affect cellular proliferation and differentiation in target tissues. Transcription factor activity is modulated by bound coactivator and corepressor proteins like ZBTB7A that recruits NCOR1 and NCOR2 to the androgen response elements/ARE on target genes, negatively regulating androgen receptor signaling and androgen-induced cell proliferation. Transcription activation is also down-regulated by NR0B2. Activated, but not phosphorylated, by HIPK3 and ZIPK/DAPK3. The sequence is that of Androgen receptor (AR) from Crocuta crocuta (Spotted hyena).